The primary structure comprises 441 residues: Ribosomal protein uS12 methylthiotransferase RimO (441 aa).

Residues 8-118 form the MTTase N-terminal domain; that stretch reads PKIGFVSLGC…VLQHVHHYVP (111 aa). Residues Cys17, Cys53, Cys82, Cys150, Cys154, and Cys157 each coordinate [4Fe-4S] cluster. The Radical SAM core domain maps to 136 to 373; the sequence is LTPRHYAYLK…MALQQQISAE (238 aa). One can recognise a TRAM domain in the interval 376 to 441; it reads QEKVGREILV…DEYDLWGSLV (66 aa).

Belongs to the methylthiotransferase family. RimO subfamily. [4Fe-4S] cluster is required as a cofactor.

It localises to the cytoplasm. The enzyme catalyses L-aspartate(89)-[ribosomal protein uS12]-hydrogen + (sulfur carrier)-SH + AH2 + 2 S-adenosyl-L-methionine = 3-methylsulfanyl-L-aspartate(89)-[ribosomal protein uS12]-hydrogen + (sulfur carrier)-H + 5'-deoxyadenosine + L-methionine + A + S-adenosyl-L-homocysteine + 2 H(+). Catalyzes the methylthiolation of an aspartic acid residue of ribosomal protein uS12. This is Ribosomal protein uS12 methylthiotransferase RimO from Cronobacter sakazakii (strain ATCC BAA-894) (Enterobacter sakazakii).